The sequence spans 343 residues: Probable siderophore transport system permease protein YfhA (343 aa).

A run of 9 helical transmembrane segments spans residues 15 to 35, 69 to 89, 97 to 117, 130 to 150, 160 to 180, 204 to 224, 249 to 269, 289 to 309, and 317 to 337; these read WIVF…SAGL, ILTA…LQGL, PDII…MMFF, WLPA…YLLA, LVLI…LLMI, QHVK…FVAL, FFLL…AGTI, GALL…ADIV, and VEVP…IYLL.

Belongs to the binding-protein-dependent transport system permease family. FecCD subfamily. The complex is composed of one ATP-binding protein (YusV), two transmembrane proteins (YfiZ and YfhA) and a solute-binding protein (YfiY).

It localises to the cell membrane. In terms of biological role, part of the ABC transporter complex YfiYZ/YfhA/YusV involved in import of the iron-hydroxamate siderophores schizokinen, arthrobactin and corprogen. In Bacillus subtilis (strain 168), this protein is Probable siderophore transport system permease protein YfhA (yfhA).